The chain runs to 180 residues: Small ribosomal subunit protein bS21c (180 aa).

A chloroplast-targeting transit peptide spans 1–79 (MASTSSLLNF…PSLAFSNTLY (79 aa)). Residues 14-45 (LFPSNTSLPPSSNPKFPNPNSLSSQQNSISIS) show a composition bias toward low complexity. Disordered regions lie at residues 14–49 (LFPS…SKKH) and 124–180 (NKQE…GAPF). A compositionally biased stretch (basic residues) spans 130 to 147 (KRKHREAAKRNSRRRRGP). Basic and acidic residues predominate over residues 154-166 (GKEEATKVDKKED).

In terms of assembly, component of the chloroplast small ribosomal subunit (SSU). Mature 70S chloroplast ribosomes of higher plants consist of a small (30S) and a large (50S) subunit. The 30S small subunit contains 1 molecule of ribosomal RNA (16S rRNA) and 24 different proteins. The 50S large subunit contains 3 rRNA molecules (23S, 5S and 4.5S rRNA) and 33 different proteins. bS21c binds directly to 16S ribosomal RNA.

Its subcellular location is the plastid. The protein resides in the chloroplast. Component of the chloroplast ribosome (chloro-ribosome), a dedicated translation machinery responsible for the synthesis of chloroplast genome-encoded proteins, including proteins of the transcription and translation machinery and components of the photosynthetic apparatus. The protein is Small ribosomal subunit protein bS21c (rps21) of Spinacia oleracea (Spinach).